Reading from the N-terminus, the 158-residue chain is 2-C-methyl-D-erythritol 2,4-cyclodiphosphate synthase (158 aa).

A divalent metal cation contacts are provided by D9 and H11. Residues 9 to 11 (DVH) and 35 to 36 (HS) contribute to the 4-CDP-2-C-methyl-D-erythritol 2-phosphate site. Position 43 (H43) interacts with a divalent metal cation. 4-CDP-2-C-methyl-D-erythritol 2-phosphate contacts are provided by residues 57 to 59 (DIG), 62 to 66 (FPDTD), 133 to 136 (TTTE), F140, and R143.

The protein belongs to the IspF family. In terms of assembly, homotrimer. A divalent metal cation serves as cofactor.

It carries out the reaction 4-CDP-2-C-methyl-D-erythritol 2-phosphate = 2-C-methyl-D-erythritol 2,4-cyclic diphosphate + CMP. The protein operates within isoprenoid biosynthesis; isopentenyl diphosphate biosynthesis via DXP pathway; isopentenyl diphosphate from 1-deoxy-D-xylulose 5-phosphate: step 4/6. Involved in the biosynthesis of isopentenyl diphosphate (IPP) and dimethylallyl diphosphate (DMAPP), two major building blocks of isoprenoid compounds. Catalyzes the conversion of 4-diphosphocytidyl-2-C-methyl-D-erythritol 2-phosphate (CDP-ME2P) to 2-C-methyl-D-erythritol 2,4-cyclodiphosphate (ME-CPP) with a corresponding release of cytidine 5-monophosphate (CMP). The polypeptide is 2-C-methyl-D-erythritol 2,4-cyclodiphosphate synthase (Actinobacillus succinogenes (strain ATCC 55618 / DSM 22257 / CCUG 43843 / 130Z)).